A 355-amino-acid polypeptide reads, in one-letter code: Protein RecA (355 aa).

Glycine 65–threonine 72 is an ATP binding site.

It belongs to the RecA family.

Its subcellular location is the cytoplasm. Functionally, can catalyze the hydrolysis of ATP in the presence of single-stranded DNA, the ATP-dependent uptake of single-stranded DNA by duplex DNA, and the ATP-dependent hybridization of homologous single-stranded DNAs. It interacts with LexA causing its activation and leading to its autocatalytic cleavage. The polypeptide is Protein RecA (Pseudomonas putida (strain ATCC 47054 / DSM 6125 / CFBP 8728 / NCIMB 11950 / KT2440)).